Here is a 55-residue protein sequence, read N- to C-terminus: Large ribosomal subunit protein bL33 (55 aa).

This sequence belongs to the bacterial ribosomal protein bL33 family.

This Rhizorhabdus wittichii (strain DSM 6014 / CCUG 31198 / JCM 15750 / NBRC 105917 / EY 4224 / RW1) (Sphingomonas wittichii) protein is Large ribosomal subunit protein bL33.